Here is a 1251-residue protein sequence, read N- to C-terminus: Topoisomerase 1-associated factor 1 (1251 aa).

Disordered regions lie at residues 328–354 (ERKM…KDLG), 564–601 (RRKK…KTSQ), 901–1021 (RRKT…YEGN), and 1041–1251 (ATFG…SDEE). A compositionally biased stretch (basic and acidic residues) spans 344-354 (RKEDMEPKDLG). A compositionally biased stretch (acidic residues) spans 576 to 591 (QGDDEGQGDAEDDSAD). Basic and acidic residues-rich tracts occupy residues 592 to 601 (DERQAEKTSQ) and 985 to 1011 (AEAR…YVDP). 2 stretches are compositionally biased toward acidic residues: residues 1069–1079 (DGDDGEGEDAV) and 1103–1122 (GGED…EEDG). Residues 1123 to 1136 (SAVSEAEAPAAAGR) show a composition bias toward low complexity. The segment covering 1137-1151 (RPNKRRKPAQKKKKR) has biased composition (basic residues). Residues 1157–1179 (SGEDDDVGMDMDVDVDADADADA) are compositionally biased toward acidic residues. A compositionally biased stretch (polar residues) spans 1182–1205 (FTQSSKDGAVTNDTPLSSDPSRTT).

The protein belongs to the timeless family. Component of the fork protection complex (FPC) consisting of TOF1 and CSM3.

It is found in the nucleus. Functionally, forms a fork protection complex (FPC) with CSM3 and which is required for chromosome segregation during meiosis and DNA damage repair. FPC coordinates leading and lagging strand synthesis and moves with the replication fork. FPC stabilizes replication forks in a configuration that is recognized by replication checkpoint sensors. The polypeptide is Topoisomerase 1-associated factor 1 (TOF1) (Chaetomium globosum (strain ATCC 6205 / CBS 148.51 / DSM 1962 / NBRC 6347 / NRRL 1970) (Soil fungus)).